We begin with the raw amino-acid sequence, 253 residues long: uncharacterized protein (253 aa).

The interval 211–235 (DEPEPAQPTLTVPSAQPVSNRRGKP) is disordered. Over residues 218 to 229 (PTLTVPSAQPVS) the composition is skewed to polar residues.

This is an uncharacterized protein from Mycobacterium tuberculosis (strain CDC 1551 / Oshkosh).